The chain runs to 424 residues: Histidine--tRNA ligase (424 aa).

Belongs to the class-II aminoacyl-tRNA synthetase family. In terms of assembly, homodimer.

The protein resides in the cytoplasm. It catalyses the reaction tRNA(His) + L-histidine + ATP = L-histidyl-tRNA(His) + AMP + diphosphate + H(+). This Salmonella agona (strain SL483) protein is Histidine--tRNA ligase.